The primary structure comprises 352 residues: Protein RecA (352 aa).

Residue 68–75 participates in ATP binding; the sequence is GPESSGKT.

This sequence belongs to the RecA family.

It is found in the cytoplasm. Can catalyze the hydrolysis of ATP in the presence of single-stranded DNA, the ATP-dependent uptake of single-stranded DNA by duplex DNA, and the ATP-dependent hybridization of homologous single-stranded DNAs. It interacts with LexA causing its activation and leading to its autocatalytic cleavage. The polypeptide is Protein RecA (Clostridium perfringens (strain ATCC 13124 / DSM 756 / JCM 1290 / NCIMB 6125 / NCTC 8237 / Type A)).